The following is a 408-amino-acid chain: UDP-N-acetylglucosamine--dolichyl-phosphate N-acetylglucosaminephosphotransferase (408 aa).

The Lumenal segment spans residues 1 to 10 (MWAFPELPLP). Residues 11-38 (LLVNLFGSLLGFVATVTLIPAFRSHFIA) traverse the membrane as a helical segment. Residues 39–58 (ARLCGQDLNKLSRQQIPESQ) lie on the Cytoplasmic side of the membrane. UDP-N-acetyl-alpha-D-glucosamine-binding positions include 44 to 46 (QDL) and Glu56. The chain crosses the membrane as a helical span at residues 59–78 (GVICGAVFLIILFCFIPFPF). The Lumenal segment spans residues 79–91 (LNCFVEEQCKAFP). Residues 92–118 (HHEFVALIGALLAICCMIFLGFADDVL) traverse the membrane as a helical segment. Topologically, residues 119-121 (NLR) are cytoplasmic. A helical transmembrane segment spans residues 122–143 (WRHKLLLPTAASLPLLMVYFTN). Position 125 (Lys125) interacts with dolichyl phosphate. Residues 144 to 166 (FGNTTIVVPKPFRWILGLHLDLG) are Lumenal-facing. An N-linked (GlcNAc...) asparagine glycan is attached at Asn146. A helical membrane pass occupies residues 167 to 186 (ILYYVYMGLLAVFCTNAINI). 178–186 (VFCTNAINI) lines the dolichyl phosphate pocket. Residue Asn185 participates in Mg(2+) binding. Topologically, residues 187–192 (LAGING) are cytoplasmic. Asn191 serves as a coordination point for UDP-N-acetyl-alpha-D-glucosamine. Residues 193–213 (LEAGQSLVISASIIVFNLVEL) traverse the membrane as a helical segment. The Lumenal portion of the chain corresponds to 214 to 218 (EGDYR). A helical membrane pass occupies residues 219-242 (DDHVFSLYFMIPFFFTTLGLLYHN). Residues 243-250 (WYPSQVFV) lie on the Cytoplasmic side of the membrane. The chain crosses the membrane as a helical span at residues 251–269 (GDTFCYFAGMTFAVVGILG). Asp252 serves as a coordination point for Mg(2+). The Lumenal portion of the chain corresponds to 270 to 271 (HF). Residues 272-293 (SKTMLLFFIPQVFNFLYSLPQL) form a helical membrane-spanning segment. Residues 294 to 375 (LHAIPCPRHR…LLLKIFGPIH (82 aa)) lie on the Cytoplasmic side of the membrane. 301–303 (RHR) contacts UDP-N-acetyl-alpha-D-glucosamine. The chain crosses the membrane as a helical span at residues 376–400 (ERNLTLLLLLLQILSSAVTFSIRYQ). The Lumenal segment spans residues 401-408 (LVRLFYDV).

The protein belongs to the glycosyltransferase 4 family. As to quaternary structure, homodimer. It depends on Mg(2+) as a cofactor.

Its subcellular location is the endoplasmic reticulum membrane. It catalyses the reaction a di-trans,poly-cis-dolichyl phosphate + UDP-N-acetyl-alpha-D-glucosamine = an N-acetyl-alpha-D-glucosaminyl-diphospho-di-trans,poly-cis-dolichol + UMP. It functions in the pathway protein modification; protein glycosylation. Its activity is regulated as follows. Inhibited by natural nucleoside antibiotic tunicamycin, which acts as a structural analog and competitor of UDP-GlcNAc. Functionally, UDP-N-acetylglucosamine--dolichyl-phosphate N-acetylglucosaminephosphotransferase that operates in the biosynthetic pathway of dolichol-linked oligosaccharides, the glycan precursors employed in protein asparagine (N)-glycosylation. The assembly of dolichol-linked oligosaccharides begins on the cytosolic side of the endoplasmic reticulum membrane and finishes in its lumen. The sequential addition of sugars to dolichol pyrophosphate produces dolichol-linked oligosaccharides containing fourteen sugars, including two GlcNAcs, nine mannoses and three glucoses. Once assembled, the oligosaccharide is transferred from the lipid to nascent proteins by oligosaccharyltransferases. Catalyzes the initial step of dolichol-linked oligosaccharide biosynthesis, transfering GlcNAc-1-P from cytosolic UDP-GlcNAc onto the carrier lipid dolichyl phosphate (P-dolichol), yielding GlcNAc-P-P-dolichol embedded in the cytoplasmic leaflet of the endoplasmic reticulum membrane. This Cricetulus griseus (Chinese hamster) protein is UDP-N-acetylglucosamine--dolichyl-phosphate N-acetylglucosaminephosphotransferase (DPAGT1).